A 657-amino-acid polypeptide reads, in one-letter code: MLSIINLTSKTIKEVNKGVDLVIGFFDGIHKGHAKLFKQSDRFNLLTFDHIPKKQRLLYPKVDEIEQLSALSGLEQLLVYDLLNNNLSAQEFIDNYIKLIQPKRIIVGSDFKFGSDQVDYSLFAKNGYEVVVVKKDHCSTSEIKKLIINCDLDQANKLLLTPFYLKGTVIKNAQRGRTIGFVTANIILDNQLIELTEGSYVCKVIVDNKTYQGICFIGKPKTFDEKQRQCEAHIFDFDQDIYGKKIKVELYQFIRPTVKFNSINELKEAIENDKKAALSFFHKQEKPKVVVALSGGVDSAVCAYLLQQQGYDVVAAFMQNWDKDLNFELLSDHADDQIQGCDAKQDYEDTQKLCEQLKIKLYHFNFVEQYWNDVFLKVLEDYKKGLTPNPDVLCNQFGKFGWFINALRKQFGDDIKIAFGHYAKLITKDDEVFLVHTKDHNKDQTYFLTMLKKEQLKNIIFPLSELDKPTVREIAKQANLYVANKKDSTGICFIGERNFKQFLSNYLAIKKGPIILIDENKKIGEHDGLYFYTIGQSRRLHVGGTKEKIFVCDKDYNNNTLYVCYESSKDQYLSSVSCELEKFNWLIDTKDQLFNKKLWIRFRHRQKLQECEIVSYHDDKVIVKYTKQIGVTPGQYGVIYDQNLWVVGGGKITKIIK.

Positions 1–141 (MLSIINLTSK…VVKKDHCSTS (141 aa)) are FMN adenylyltransferase. Residues 158–282 (LLLTPFYLKG…DKKAALSFFH (125 aa)) are riboflavin kinase. Residues 283 to 657 (KQEKPKVVVA…GGGKITKIIK (375 aa)) are tRNA-specific 2-thiouridylase MnmA. ATP contacts are provided by residues 292–299 (ALSGGVDS) and Met-318. The segment at 389 to 391 (NPD) is interaction with target base in tRNA. The Nucleophile role is filled by Cys-394. Cys-394 and Cys-492 form a disulfide bridge. Gly-420 is an ATP binding site. Residues 442-444 (KDQ) form an interaction with tRNA region. Residue Cys-492 is the Cysteine persulfide intermediate of the active site.

This sequence in the N-terminal section; belongs to the RibF family. In the C-terminal section; belongs to the MnmA/TRMU family.

The protein localises to the cytoplasm. The enzyme catalyses riboflavin + ATP = FMN + ADP + H(+). It carries out the reaction FMN + ATP + H(+) = FAD + diphosphate. The catalysed reaction is S-sulfanyl-L-cysteinyl-[protein] + uridine(34) in tRNA + AH2 + ATP = 2-thiouridine(34) in tRNA + L-cysteinyl-[protein] + A + AMP + diphosphate + H(+). It participates in cofactor biosynthesis; FAD biosynthesis; FAD from FMN: step 1/1. The protein operates within cofactor biosynthesis; FMN biosynthesis; FMN from riboflavin (ATP route): step 1/1. Its function is as follows. Involved in FAD and FMN biosynthesis. Functionally, catalyzes the 2-thiolation of uridine at the wobble position (U34) of tRNA, leading to the formation of s(2)U34. The chain is Trifunctional protein RibF/MnmA (ribF/mnmA) from Mycoplasmoides gallisepticum (strain R(low / passage 15 / clone 2)) (Mycoplasma gallisepticum).